Consider the following 334-residue polypeptide: Phosphate acyltransferase (334 aa).

The protein belongs to the PlsX family. Homodimer. Probably interacts with PlsY.

It localises to the cytoplasm. The catalysed reaction is a fatty acyl-[ACP] + phosphate = an acyl phosphate + holo-[ACP]. It functions in the pathway lipid metabolism; phospholipid metabolism. In terms of biological role, catalyzes the reversible formation of acyl-phosphate (acyl-PO(4)) from acyl-[acyl-carrier-protein] (acyl-ACP). This enzyme utilizes acyl-ACP as fatty acyl donor, but not acyl-CoA. This is Phosphate acyltransferase from Streptococcus thermophilus (strain CNRZ 1066).